Here is a 482-residue protein sequence, read N- to C-terminus: Putative alpha-L-fucosidase (482 aa).

Positions 1 to 16 are cleaved as a signal peptide; the sequence is MIFLIFSILFLHLANC. Asn-182, Asn-343, Asn-359, and Asn-419 each carry an N-linked (GlcNAc...) asparagine glycan.

This sequence belongs to the glycosyl hydrolase 29 family.

It carries out the reaction an alpha-L-fucoside + H2O = L-fucose + an alcohol. Functionally, alpha-L-fucosidase is responsible for hydrolyzing the alpha-1,6-linked fucose joined to the reducing-end N-acetylglucosamine of the carbohydrate moieties of glycoproteins. In Caenorhabditis elegans, this protein is Putative alpha-L-fucosidase.